Consider the following 154-residue polypeptide: Egg-lysin (154 aa).

A signal peptide spans 1 to 18 (MKLLVLCIFAMMATLAMS).

As to quaternary structure, homodimer. In terms of tissue distribution, sperm.

Functionally, dissolves the egg vitelline layer nonenzymatically during fertilization. It creates a hole of about 3 mu-m in diameter through which the sperm pass. In Haliotis walallensis (Flat abalone), this protein is Egg-lysin.